Reading from the N-terminus, the 90-residue chain is Small ribosomal subunit protein bS20 (90 aa).

Basic residues predominate over residues 1-15; sequence MANHKSAQKRIRQTK. Residues 1–22 form a disordered region; the sequence is MANHKSAQKRIRQTKTRTERNR.

Belongs to the bacterial ribosomal protein bS20 family.

In terms of biological role, binds directly to 16S ribosomal RNA. This Helicobacter hepaticus (strain ATCC 51449 / 3B1) protein is Small ribosomal subunit protein bS20.